Here is a 304-residue protein sequence, read N- to C-terminus: Ribosomal RNA small subunit methyltransferase H (304 aa).

S-adenosyl-L-methionine is bound by residues 37–39 (GGH), D57, F79, D100, and H107.

Belongs to the methyltransferase superfamily. RsmH family.

It localises to the cytoplasm. The enzyme catalyses cytidine(1402) in 16S rRNA + S-adenosyl-L-methionine = N(4)-methylcytidine(1402) in 16S rRNA + S-adenosyl-L-homocysteine + H(+). Functionally, specifically methylates the N4 position of cytidine in position 1402 (C1402) of 16S rRNA. In Bacteroides fragilis (strain ATCC 25285 / DSM 2151 / CCUG 4856 / JCM 11019 / LMG 10263 / NCTC 9343 / Onslow / VPI 2553 / EN-2), this protein is Ribosomal RNA small subunit methyltransferase H.